We begin with the raw amino-acid sequence, 427 residues long: Enolase (427 aa).

Residue Gln162 participates in (2R)-2-phosphoglycerate binding. Glu204 acts as the Proton donor in catalysis. Mg(2+) contacts are provided by Asp241, Glu284, and Asp311. Residues Lys336, Arg365, Ser366, and Lys387 each coordinate (2R)-2-phosphoglycerate. The active-site Proton acceptor is Lys336.

It belongs to the enolase family. It depends on Mg(2+) as a cofactor.

It is found in the cytoplasm. It localises to the secreted. Its subcellular location is the cell surface. It catalyses the reaction (2R)-2-phosphoglycerate = phosphoenolpyruvate + H2O. It participates in carbohydrate degradation; glycolysis; pyruvate from D-glyceraldehyde 3-phosphate: step 4/5. Functionally, catalyzes the reversible conversion of 2-phosphoglycerate (2-PG) into phosphoenolpyruvate (PEP). It is essential for the degradation of carbohydrates via glycolysis. This is Enolase from Natranaerobius thermophilus (strain ATCC BAA-1301 / DSM 18059 / JW/NM-WN-LF).